The sequence spans 1076 residues: JmjC domain-containing histone demethylation protein 1 (1076 aa).

Positions 93–265 (FSQTPLEDLV…TQLRVYQVEN (173 aa)) constitute a JmjC domain. T159 serves as a coordination point for substrate. Fe cation-binding residues include H162 and D164. A substrate-binding site is contributed by K179. H233 is a binding site for Fe cation. 2 disordered regions span residues 598–748 (FEEE…DPVV) and 789–1056 (KIEP…KIPS). Positions 610–634 (DQEEEEYDAEEPEDQEEEEEDEYQA) are enriched in acidic residues. Residues 653–680 (AKNDESEEVSVKKDKKEKMEKVEKDEKR) show a composition bias toward basic and acidic residues. Residues 681–698 (RNSKSKKDKISKEKKKKE) show a composition bias toward basic residues. Basic and acidic residues-rich tracts occupy residues 699-714 (RERIELESQLDAELRA) and 789-811 (KIEPKRGSEEGSQSREQSMEPEH). Over residues 935–946 (ASAPSSRHSSIS) the composition is skewed to low complexity. Polar residues-rich tracts occupy residues 957 to 990 (FNSSRNSSIDTPYTPTTVTPSRSSWLPNTSSINR) and 1004 to 1019 (DSLSPINIASSPTYPT). Basic and acidic residues predominate over residues 1044 to 1056 (QHHDDGHKHKIPS).

The protein belongs to the JHDM1 histone demethylase family. Fe(2+) is required as a cofactor.

It localises to the nucleus. The enzyme catalyses N(6),N(6)-dimethyl-L-lysyl(36)-[histone H3] + 2 2-oxoglutarate + 2 O2 = L-lysyl(36)-[histone H3] + 2 formaldehyde + 2 succinate + 2 CO2. Functionally, histone demethylase that specifically demethylates 'Lys-36' of histone H3, thereby playing a central role in histone code. Has a role in regulating lifespan. The protein is JmjC domain-containing histone demethylation protein 1 (jhdm-1) of Caenorhabditis elegans.